Here is a 603-residue protein sequence, read N- to C-terminus: Elongation factor 4 (603 aa).

The region spanning 9–191 (SNIRNFSIIA…RIVRQIPPPK (183 aa)) is the tr-type G domain. GTP-binding positions include 21–26 (DHGKST) and 138–141 (NKID).

The protein belongs to the TRAFAC class translation factor GTPase superfamily. Classic translation factor GTPase family. LepA subfamily.

The protein localises to the cell inner membrane. It catalyses the reaction GTP + H2O = GDP + phosphate + H(+). In terms of biological role, required for accurate and efficient protein synthesis under certain stress conditions. May act as a fidelity factor of the translation reaction, by catalyzing a one-codon backward translocation of tRNAs on improperly translocated ribosomes. Back-translocation proceeds from a post-translocation (POST) complex to a pre-translocation (PRE) complex, thus giving elongation factor G a second chance to translocate the tRNAs correctly. Binds to ribosomes in a GTP-dependent manner. In Idiomarina loihiensis (strain ATCC BAA-735 / DSM 15497 / L2-TR), this protein is Elongation factor 4.